A 275-amino-acid chain; its full sequence is MHAVQRQIAEQLKVQPPFADQNALQAEVARRVSFIKECLQNARLKTLVLGISGGVDSLTAGLLAQRAVKELRASTGDNSYRFIAVRLPYVVQADEHEAQASVDFIEPDERHTINIGSSVKALAAEVKAFDGLPASSVDFVLGNTKARMRMVAQYTVAGAYQGLVIGTDHAAEAVMGFFTKFGDGACDLAPLSGLVKNQVRAIARHFGAPESLVEKVPTADLEDLSPGKPDEASHGVTYAEIDAFLHGEPVREEAFKIICETYAKTQHKRELPYAP.

Position 50–57 (50–57 (GISGGVDS)) interacts with ATP. Asp56 is a Mg(2+) binding site. Arg147 contributes to the deamido-NAD(+) binding site. An ATP-binding site is contributed by Thr167. Glu172 is a binding site for Mg(2+). Residues Lys180 and Asp187 each coordinate deamido-NAD(+). 2 residues coordinate ATP: Lys196 and Thr218. Position 267-268 (267-268 (HK)) interacts with deamido-NAD(+).

Belongs to the NAD synthetase family. Homodimer.

It carries out the reaction deamido-NAD(+) + NH4(+) + ATP = AMP + diphosphate + NAD(+) + H(+). It functions in the pathway cofactor biosynthesis; NAD(+) biosynthesis; NAD(+) from deamido-NAD(+) (ammonia route): step 1/1. Functionally, catalyzes the ATP-dependent amidation of deamido-NAD to form NAD. Uses ammonia as a nitrogen source. In Pseudomonas savastanoi pv. phaseolicola (strain 1448A / Race 6) (Pseudomonas syringae pv. phaseolicola (strain 1448A / Race 6)), this protein is NH(3)-dependent NAD(+) synthetase.